The following is a 48-amino-acid chain: Large ribosomal subunit protein eL40 (48 aa).

Belongs to the eukaryotic ribosomal protein eL40 family.

The protein is Large ribosomal subunit protein eL40 of Methanosphaerula palustris (strain ATCC BAA-1556 / DSM 19958 / E1-9c).